A 438-amino-acid polypeptide reads, in one-letter code: Glutamyl-tRNA reductase (438 aa).

Substrate is bound by residues 55-58 (TCNR), serine 118, 123-125 (ETQ), and glutamine 129. Cysteine 56 (nucleophile) is an active-site residue. Residue 198–203 (GAGDMI) participates in NADP(+) binding.

Belongs to the glutamyl-tRNA reductase family. In terms of assembly, homodimer.

It catalyses the reaction (S)-4-amino-5-oxopentanoate + tRNA(Glu) + NADP(+) = L-glutamyl-tRNA(Glu) + NADPH + H(+). It functions in the pathway porphyrin-containing compound metabolism; protoporphyrin-IX biosynthesis; 5-aminolevulinate from L-glutamyl-tRNA(Glu): step 1/2. Functionally, catalyzes the NADPH-dependent reduction of glutamyl-tRNA(Glu) to glutamate 1-semialdehyde (GSA). This is Glutamyl-tRNA reductase from Polynucleobacter asymbioticus (strain DSM 18221 / CIP 109841 / QLW-P1DMWA-1) (Polynucleobacter necessarius subsp. asymbioticus).